A 239-amino-acid chain; its full sequence is tRNA (guanine-N(7)-)-methyltransferase (239 aa).

Residues Glu69, Glu94, Asp121, and Asp144 each contribute to the S-adenosyl-L-methionine site. Asp144 is an active-site residue. Residues Lys148, Asp180, and 217 to 220 (TKFE) each bind substrate.

Belongs to the class I-like SAM-binding methyltransferase superfamily. TrmB family.

The catalysed reaction is guanosine(46) in tRNA + S-adenosyl-L-methionine = N(7)-methylguanosine(46) in tRNA + S-adenosyl-L-homocysteine. It functions in the pathway tRNA modification; N(7)-methylguanine-tRNA biosynthesis. Catalyzes the formation of N(7)-methylguanine at position 46 (m7G46) in tRNA. The sequence is that of tRNA (guanine-N(7)-)-methyltransferase from Alcanivorax borkumensis (strain ATCC 700651 / DSM 11573 / NCIMB 13689 / SK2).